The following is an 88-amino-acid chain: Putative sulfur carrier protein AF_0552 (88 aa).

It belongs to the sulfur carrier protein CysO family.

The protein is Putative sulfur carrier protein AF_0552 of Archaeoglobus fulgidus (strain ATCC 49558 / DSM 4304 / JCM 9628 / NBRC 100126 / VC-16).